A 533-amino-acid chain; its full sequence is Retinoid isomerohydrolase (533 aa).

Cysteine 112 is lipidated: S-palmitoyl cysteine; in membrane form. Position 117 is a phosphoserine (serine 117). Histidine 180 lines the Fe cation pocket. Cysteine 231 carries S-palmitoyl cysteine; in membrane form lipidation. Histidine 241 and histidine 313 together coordinate Fe cation. The S-palmitoyl cysteine; in membrane form moiety is linked to residue cysteine 329. Histidine 527 contacts Fe cation.

This sequence belongs to the carotenoid oxygenase family. It depends on Fe(2+) as a cofactor. In terms of processing, palmitoylation by LRAT regulates ligand binding specificity; the palmitoylated form (membrane form) specifically binds all-trans-retinyl-palmitate, while the soluble unpalmitoylated form binds all-trans-retinol (vitamin A). As to expression, retinal pigment epithelium specific.

It is found in the cytoplasm. It localises to the cell membrane. The protein localises to the microsome membrane. It catalyses the reaction an all-trans-retinyl ester + H2O = 11-cis-retinol + a fatty acid + H(+). The catalysed reaction is lutein = (3R,3'S)-zeaxanthin. The enzyme catalyses all-trans-retinyl hexadecanoate + H2O = 11-cis-retinol + hexadecanoate + H(+). Its function is as follows. Critical isomerohydrolase in the retinoid cycle involved in regeneration of 11-cis-retinal, the chromophore of rod and cone opsins. Catalyzes the cleavage and isomerization of all-trans-retinyl fatty acid esters to 11-cis-retinol which is further oxidized by 11-cis retinol dehydrogenase to 11-cis-retinal for use as visual chromophore. Essential for the production of 11-cis retinal for both rod and cone photoreceptors. Also capable of catalyzing the isomerization of lutein to meso-zeaxanthin an eye-specific carotenoid. The soluble form binds vitamin A (all-trans-retinol), making it available for LRAT processing to all-trans-retinyl ester. The membrane form, palmitoylated by LRAT, binds all-trans-retinyl esters, making them available for IMH (isomerohydrolase) processing to all-cis-retinol. The soluble form is regenerated by transferring its palmitoyl groups onto 11-cis-retinol, a reaction catalyzed by LRAT. This is Retinoid isomerohydrolase (RPE65) from Gallus gallus (Chicken).